A 399-amino-acid chain; its full sequence is Digeranylgeranylglycerophospholipid reductase (399 aa).

FAD contacts are provided by glycine 15, glutamate 34, cysteine 45, alanine 46, glycine 48, arginine 99, alanine 123, aspartate 280, glycine 292, and isoleucine 293.

It belongs to the geranylgeranyl reductase family. DGGGPL reductase subfamily. FAD is required as a cofactor.

It catalyses the reaction a 2,3-bis-O-phytanyl-sn-glycerol 1-phospholipid + 8 oxidized 2[4Fe-4S]-[ferredoxin] = a 2,3-bis-O-(geranylgeranyl)-sn-glycerol 1-phospholipid + 8 reduced 2[4Fe-4S]-[ferredoxin] + 16 H(+). The enzyme catalyses 2,3-bis-O-(phytanyl)-sn-glycerol 1-phosphate + 8 oxidized 2[4Fe-4S]-[ferredoxin] = 2,3-bis-O-(geranylgeranyl)-sn-glycerol 1-phosphate + 8 reduced 2[4Fe-4S]-[ferredoxin] + 16 H(+). It carries out the reaction a 2,3-bis-O-phytanyl-sn-glycerol 1-phospholipid + 8 A = a 2,3-bis-O-(geranylgeranyl)-sn-glycerol 1-phospholipid + 8 AH2. The catalysed reaction is CDP-2,3-bis-O-(geranylgeranyl)-sn-glycerol + 8 AH2 = CDP-2,3-bis-O-(phytanyl)-sn-glycerol + 8 A. It catalyses the reaction archaetidylserine + 8 AH2 = 2,3-bis-O-phytanyl-sn-glycero-3-phospho-L-serine + 8 A. The protein operates within membrane lipid metabolism; glycerophospholipid metabolism. In terms of biological role, is involved in the reduction of 2,3-digeranylgeranylglycerophospholipids (unsaturated archaeols) into 2,3-diphytanylglycerophospholipids (saturated archaeols) in the biosynthesis of archaeal membrane lipids. Catalyzes the formation of archaetidic acid (2,3-di-O-phytanyl-sn-glyceryl phosphate) from 2,3-di-O-geranylgeranylglyceryl phosphate (DGGGP) via the hydrogenation of each double bond of the isoprenoid chains. Is also probably able to reduce double bonds of geranyl groups in CDP-2,3-bis-O-(geranylgeranyl)-sn-glycerol and archaetidylserine, thus acting at various stages in the biosynthesis of archaeal membrane lipids. The protein is Digeranylgeranylglycerophospholipid reductase of Methanosphaerula palustris (strain ATCC BAA-1556 / DSM 19958 / E1-9c).